The primary structure comprises 56 residues: Large ribosomal subunit protein bL33 (56 aa).

Over residues 1-12 the composition is skewed to basic and acidic residues; sequence MASKGGREKIKL. The disordered stretch occupies residues 1 to 27; the sequence is MASKGGREKIKLESTAGTGHFYTTNKN.

This sequence belongs to the bacterial ribosomal protein bL33 family.

The sequence is that of Large ribosomal subunit protein bL33 from Leptothrix cholodnii (strain ATCC 51168 / LMG 8142 / SP-6) (Leptothrix discophora (strain SP-6)).